The chain runs to 242 residues: Large ribosomal subunit protein uL1 (242 aa).

Belongs to the universal ribosomal protein uL1 family. Part of the 50S ribosomal subunit.

Functionally, binds directly to 23S rRNA. The L1 stalk is quite mobile in the ribosome, and is involved in E site tRNA release. Protein L1 is also a translational repressor protein, it controls the translation of the L11 operon by binding to its mRNA. The polypeptide is Large ribosomal subunit protein uL1 (Streptomyces virginiae (Streptomyces cinnamonensis)).